The following is a 69-amino-acid chain: Small, acid-soluble spore protein I (69 aa).

It belongs to the SspI family.

The protein localises to the spore core. This chain is Small, acid-soluble spore protein I, found in Geobacillus kaustophilus (strain HTA426).